Consider the following 518-residue polypeptide: Glutamate--cysteine ligase (518 aa).

Belongs to the glutamate--cysteine ligase type 1 family. Type 1 subfamily.

It carries out the reaction L-cysteine + L-glutamate + ATP = gamma-L-glutamyl-L-cysteine + ADP + phosphate + H(+). It functions in the pathway sulfur metabolism; glutathione biosynthesis; glutathione from L-cysteine and L-glutamate: step 1/2. The polypeptide is Glutamate--cysteine ligase (Klebsiella pneumoniae (strain 342)).